A 1040-amino-acid chain; its full sequence is Multidrug resistance protein MdtB (1040 aa).

12 helical membrane-spanning segments follow: residues 16–36, 347–367, 369–389, 396–416, 440–460, 472–492, 537–557, 863–883, 888–908, 911–931, 968–988, and 998–1018; these read FIMR…AGII, LMMA…NIPA, IIPG…MVFL, LTLM…IVVI, IGFT…PLLF, FAIT…TLTP, WLTL…WVFI, LGST…VLGI, FIHP…ALLA, IAGS…IGIV, ILMT…STGV, and IGMV…TPVI.

Belongs to the resistance-nodulation-cell division (RND) (TC 2.A.6) family. MdtB subfamily. As to quaternary structure, part of a tripartite efflux system composed of MdtA, MdtB and MdtC. MdtB forms a heteromultimer with MdtC.

Its subcellular location is the cell inner membrane. Functionally, the MdtABC tripartite complex confers resistance against novobiocin and deoxycholate. This Escherichia coli O81 (strain ED1a) protein is Multidrug resistance protein MdtB.